Reading from the N-terminus, the 348-residue chain is Erythronate-4-phosphate dehydrogenase (348 aa).

The substrate site is built by threonine 46 and threonine 67. Position 147 (aspartate 147) interacts with NAD(+). Arginine 209 is a catalytic residue. Residue aspartate 233 coordinates NAD(+). Glutamate 238 is a catalytic residue. The active-site Proton donor is histidine 255. Position 258 (glycine 258) interacts with NAD(+). Residue tyrosine 259 coordinates substrate.

This sequence belongs to the D-isomer specific 2-hydroxyacid dehydrogenase family. PdxB subfamily. In terms of assembly, homodimer.

The protein localises to the cytoplasm. The catalysed reaction is 4-phospho-D-erythronate + NAD(+) = (R)-3-hydroxy-2-oxo-4-phosphooxybutanoate + NADH + H(+). The protein operates within cofactor biosynthesis; pyridoxine 5'-phosphate biosynthesis; pyridoxine 5'-phosphate from D-erythrose 4-phosphate: step 2/5. Its function is as follows. Catalyzes the oxidation of erythronate-4-phosphate to 3-hydroxy-2-oxo-4-phosphonooxybutanoate. This Bacteroides fragilis (strain YCH46) protein is Erythronate-4-phosphate dehydrogenase.